Reading from the N-terminus, the 347-residue chain is D-fructose 1,6-bisphosphatase class 2/sedoheptulose 1,7-bisphosphatase (347 aa).

Asp33, Glu57, Asp97, and Glu100 together coordinate Mn(2+). Substrate contacts are provided by residues 100 to 102 (EGT), Tyr131, 176 to 178 (RDR), and 198 to 200 (DGD). Glu225 is a binding site for Mn(2+).

This sequence belongs to the FBPase class 2 family. In terms of assembly, homotetramer. Mn(2+) is required as a cofactor.

The catalysed reaction is beta-D-fructose 1,6-bisphosphate + H2O = beta-D-fructose 6-phosphate + phosphate. The enzyme catalyses D-sedoheptulose 1,7-bisphosphate + H2O = D-sedoheptulose 7-phosphate + phosphate. The protein operates within carbohydrate biosynthesis; Calvin cycle. Functionally, catalyzes the hydrolysis of fructose 1,6-bisphosphate (Fru 1,6-P2) and sedoheptulose 1,7-bisphosphate (Sed 1,7-P2) to fructose 6-phosphate and sedoheptulose 7-phosphate, respectively. In Thermosynechococcus vestitus (strain NIES-2133 / IAM M-273 / BP-1), this protein is D-fructose 1,6-bisphosphatase class 2/sedoheptulose 1,7-bisphosphatase.